The chain runs to 105 residues: Small ribosomal subunit protein uS10 (105 aa).

Belongs to the universal ribosomal protein uS10 family. In terms of assembly, part of the 30S ribosomal subunit.

Its function is as follows. Involved in the binding of tRNA to the ribosomes. The sequence is that of Small ribosomal subunit protein uS10 from Desulfotalea psychrophila (strain LSv54 / DSM 12343).